A 217-amino-acid chain; its full sequence is MSSNNKTDDSDDRSFWQNSTSYDASSKIFLVTTVSFSIIIIIVFVYYLYAKFVLHRRSAFQDLSFSVVSQPPKRGLDSLVIASLPTFVVGIKNDVAGTECAVCLSLLEEKDNARMLPNCKHVFHVSCVDTWLTTQSTCPVCRTEAEPSHPRLEPEPREGPVGDFAPPLDFAGVDNKTGGSSVSRLDSFRRILTRERSSNRRDHSRVDQDRELDIERQ.

A helical transmembrane segment spans residues 28–48; that stretch reads IFLVTTVSFSIIIIIVFVYYL. The RING-type; atypical zinc-finger motif lies at 100–142; it reads CAVCLSLLEEKDNARMLPNCKHVFHVSCVDTWLTTQSTCPVCR. Basic and acidic residues-rich tracts occupy residues 143–160 and 186–217; these read TEAE…REGP and DSFR…IERQ. Residues 143 to 217 are disordered; sequence TEAEPSHPRL…QDRELDIERQ (75 aa).

It belongs to the RING-type zinc finger family. ATL subfamily.

It localises to the membrane. The catalysed reaction is S-ubiquitinyl-[E2 ubiquitin-conjugating enzyme]-L-cysteine + [acceptor protein]-L-lysine = [E2 ubiquitin-conjugating enzyme]-L-cysteine + N(6)-ubiquitinyl-[acceptor protein]-L-lysine.. It functions in the pathway protein modification; protein ubiquitination. This chain is RING-H2 finger protein ATL40 (ATL40), found in Arabidopsis thaliana (Mouse-ear cress).